Reading from the N-terminus, the 217-residue chain is dITP/XTP pyrophosphatase (217 aa).

7 to 12 is a substrate binding site; it reads SRNKKK. The active-site Proton acceptor is the D72. D72 contributes to the Mg(2+) binding site. Substrate is bound by residues S73, 163–166, K195, and 200–201; these read FGYD and HR.

The protein belongs to the HAM1 NTPase family. In terms of assembly, homodimer. The cofactor is Mg(2+).

The enzyme catalyses XTP + H2O = XMP + diphosphate + H(+). The catalysed reaction is dITP + H2O = dIMP + diphosphate + H(+). It catalyses the reaction ITP + H2O = IMP + diphosphate + H(+). Functionally, pyrophosphatase that catalyzes the hydrolysis of nucleoside triphosphates to their monophosphate derivatives, with a high preference for the non-canonical purine nucleotides XTP (xanthosine triphosphate), dITP (deoxyinosine triphosphate) and ITP. Seems to function as a house-cleaning enzyme that removes non-canonical purine nucleotides from the nucleotide pool, thus preventing their incorporation into DNA/RNA and avoiding chromosomal lesions. The protein is dITP/XTP pyrophosphatase of Corynebacterium jeikeium (strain K411).